A 20-amino-acid polypeptide reads, in one-letter code: Thylakoid lumenal 20 kDa protein (20 aa).

The interval 1-20 (RDVDVGSFLPKSPSDPSMVL) is disordered.

Its subcellular location is the plastid. The protein localises to the chloroplast thylakoid lumen. The polypeptide is Thylakoid lumenal 20 kDa protein (Spinacia oleracea (Spinach)).